The primary structure comprises 626 residues: Chaperone protein HtpG (626 aa).

Residues Met-1 to Arg-341 are a; substrate-binding. The b stretch occupies residues Glu-342–Lys-552. A disordered region spans residues Asp-490–Asn-509. Basic and acidic residues predominate over residues Lys-498–Asn-509. The tract at residues Val-553 to Lys-626 is c.

The protein belongs to the heat shock protein 90 family. As to quaternary structure, homodimer.

It is found in the cytoplasm. Functionally, molecular chaperone. Has ATPase activity. The polypeptide is Chaperone protein HtpG (Clostridium botulinum (strain Loch Maree / Type A3)).